The following is a 116-amino-acid chain: Nicotine metabolites export pump subunit NepA (116 aa).

The next 4 helical transmembrane spans lie at 10 to 30 (LTIW…TSLL), 42 to 62 (TVAV…ILKF), 67 to 87 (IAYA…GVLF), and 92 to 112 (FSWK…TLNL).

This sequence belongs to the drug/metabolite transporter (DMT) superfamily. Small multidrug resistance (SMR) (TC 2.A.7.1) family. NepA/NepB subfamily. As to quaternary structure, the efflux pump is composed of NepA and NepB.

It is found in the cell membrane. Functionally, component of an efflux pump responsible for the transport of nicotine breakdown products, in particular methylamine, out of the cell. This pump apparently serves as a metabolic valve for nicotine catabolites and may protect the bacteria from the potentially toxic side effects of these compounds. This chain is Nicotine metabolites export pump subunit NepA (nepA), found in Paenarthrobacter nicotinovorans (Arthrobacter nicotinovorans).